The chain runs to 204 residues: Putative peroxiredoxin ycf42 (204 aa).

Residues 5-163 (PKIGKTPPNF…LLRILESIQY (159 aa)) form the Thioredoxin domain.

This sequence belongs to the peroxiredoxin family. AhpC/Prx1 subfamily.

The protein localises to the plastid. Its subcellular location is the chloroplast. It carries out the reaction a hydroperoxide + [protein]-dithiol = [protein]-disulfide + an alcohol + H2O. The sequence is that of Putative peroxiredoxin ycf42 (ycf42) from Trieres chinensis (Marine centric diatom).